The primary structure comprises 952 residues: MSNAKSYKDTVNLPQTDFDMRANASKREPEIQKFWQDEQIYEKLAQNNPKELFILHDGPPYANGSLHIGHALNKILKDIINKYKLLQGYKVRYVPGWDCHGLPIELKVLQSLKSSEKEGLTPVKLRQKAHDFALQTQKEQCEGFKRYGVWGDWENPYLTLQPEYEAAQIAVFGKMALKGYIYRGLKPVHWSPSSQTALAEAELEYPEGHTSRSVYVAFPITSVSTPVLRPFLPNLSVAIWTTTPWTLPGNLAVALNPELNYSVVETSESNYLIVATDLVEKLADTFNRTLTIKATVKGLELEHTKYRHPLFDRESAILIGGDYVTTDSGTGLVHTAPGHGQEDYIVGQRYGLPILSPVDDKGNFTAEAGQFAGLNVLKDANEAIILALTEKGALLKEEAYQHKYPYDWRTKKPTIFRATEQWFASVEGFRELALEAIDSVRWIPATGKNRITSMVSERSDWCISRQRSWGVPIPVFYDEETNEPLLTEETINHVQAIFGVKGSNAWWELSVEELLPPSYRNNGRSYRKGMDTMDVWFDSGSSWNAVANARPELSYPADMYLEGSDQHRGWFQSSLLTSVAANGIAPYKTVLTHGFVLDEQGRKMSKSLGNVIDPNVIINGGKDQKKEPAYGVDVIRLWVSSVDYTNDVNIGQNILKQLVDIRNKIRNTARFLLGSLNDFDPVKDAVAYEDLPEIDRYMLHRISEVFTEVTAAFESFQFFRFFQTVQNFCVVDLSNFYIDIAKDRLYISDPNSFRRRSCQTVYAIALENLAKAIAPVLSHLAEDIWQFLPYKTPYLSVFESGWLNIDPAWNNRELADKWAKFRQLRTEVNKVMETARNDKAIGASLEAKVLLYVPDESLQQELELFNNCDSLTGNKVDELRYLFLSSQVELVSDISAIQTAEYKGESDFVSVGIVKAEGEKCDRCWNYSTQVGKFADDPTICERCNAALKGEF.

Positions 60–70 match the 'HIGH' region motif; sequence PYANGSLHIGH. Position 562 (E562) interacts with L-isoleucyl-5'-AMP. A 'KMSKS' region motif is present at residues 603–607; sequence KMSKS. An ATP-binding site is contributed by K606. Zn(2+)-binding residues include C921, C924, C941, and C944.

The protein belongs to the class-I aminoacyl-tRNA synthetase family. IleS type 1 subfamily. Monomer. Zn(2+) is required as a cofactor.

The protein localises to the cytoplasm. The catalysed reaction is tRNA(Ile) + L-isoleucine + ATP = L-isoleucyl-tRNA(Ile) + AMP + diphosphate. Catalyzes the attachment of isoleucine to tRNA(Ile). As IleRS can inadvertently accommodate and process structurally similar amino acids such as valine, to avoid such errors it has two additional distinct tRNA(Ile)-dependent editing activities. One activity is designated as 'pretransfer' editing and involves the hydrolysis of activated Val-AMP. The other activity is designated 'posttransfer' editing and involves deacylation of mischarged Val-tRNA(Ile). This Microcystis aeruginosa (strain NIES-843 / IAM M-2473) protein is Isoleucine--tRNA ligase.